Consider the following 686-residue polypeptide: Amyloid-beta-like protein (686 aa).

Residues Met-1–Ala-21 form the signal peptide. Over Glu-22–Gln-621 the chain is Extracellular. Positions Glu-32 to His-125 are GFLD subdomain. Residues Glu-32 to Asn-197 enclose the E1 domain. 6 disulfides stabilise this stretch: Cys-42–Cys-65, Cys-76–Cys-119, Cys-101–Cys-108, Cys-135–Cys-195, Cys-146–Cys-182, and Cys-160–Cys-194. An N-linked (GlcNAc...) asparagine glycan is attached at Asn-84. The tract at residues His-133–Asn-197 is cuBD subdomain. N-linked (GlcNAc...) asparagine glycosylation is present at Asn-201. The disordered stretch occupies residues Asn-201–Phe-245. The segment covering Asp-211 to Ser-239 has biased composition (acidic residues). The E2 domain occupies Ser-240–Tyr-440. An N-linked (GlcNAc...) asparagine glycan is attached at Asn-249. Heparin is bound by residues Asn-252–Asp-255 and His-382. An N-linked (GlcNAc...) asparagine glycan is attached at Asn-417. Disordered stretches follow at residues Pro-479–Lys-526 and Lys-550–Glu-585. The span at Ser-500–Glu-516 shows a compositional bias: acidic residues. The segment covering Gln-517 to Lys-526 has biased composition (basic and acidic residues). Residues Thr-558–Ser-567 show a composition bias toward acidic residues. The helical transmembrane segment at Pro-622–Thr-642 threads the bilayer. The Cytoplasmic segment spans residues Asn-643–Ala-686. The short motif at Tyr-674–Tyr-679 is the YENPXY motif element.

Belongs to the APP family. As to quaternary structure, interacts (via cytoplasmic domain) with feh-1 (via PID 2 domain). In terms of processing, extracellular region is proteolytically cleaved. As to expression, expressed in the head, pharynx, spermatheca, uterus, vulva, tail and ventral neurons. Specifically expressed in nerve ring interneurons, the ventral cord, socket and amphids in the head, with strong expression in junctional cells, including the pharyngeal intestinal valve and uterine seam junction, and the excretory cell and weak expression in epidermal epithelial cells, including hyp7 cells, vulval cells, rectal valve cells, pharyngeal arcade cells and the tail hypodermis.

The protein localises to the membrane. It is found in the early endosome. In terms of biological role, required for normal developmental progression throughout all life stages. Specifically required for the molt stage during all larval transitions and morphogenesis. Acts with heterochronic genes, including members of the let-7 family, to regulate larval stage to adult transition. Acts synergistically with acn-1 in let-7 regulated postembryonic cell division of hypodermal seam cells. Acts in multiple pathways to influence daf-12 and daf-16 activity to in turn regulate physiological and reproductive processes such as body size and egg-laying. May play a role in neurotransmission. The polypeptide is Amyloid-beta-like protein (Caenorhabditis elegans).